Reading from the N-terminus, the 80-residue chain is Large ribosomal subunit protein uL29 (80 aa).

Belongs to the universal ribosomal protein uL29 family.

The sequence is that of Large ribosomal subunit protein uL29 from Mycobacterium marinum (strain ATCC BAA-535 / M).